The following is a 121-amino-acid chain: UPF0102 protein BT_2236 (121 aa).

The protein belongs to the UPF0102 family.

The polypeptide is UPF0102 protein BT_2236 (Bacteroides thetaiotaomicron (strain ATCC 29148 / DSM 2079 / JCM 5827 / CCUG 10774 / NCTC 10582 / VPI-5482 / E50)).